Reading from the N-terminus, the 164-residue chain is Transcription elongation factor GreA (164 aa).

Residues 50 to 76 adopt a coiled-coil conformation; that stretch reads YHAAREEQGQQEARIRQLQELLNNAKV.

It belongs to the GreA/GreB family.

Its function is as follows. Necessary for efficient RNA polymerase transcription elongation past template-encoded arresting sites. The arresting sites in DNA have the property of trapping a certain fraction of elongating RNA polymerases that pass through, resulting in locked ternary complexes. Cleavage of the nascent transcript by cleavage factors such as GreA or GreB allows the resumption of elongation from the new 3'terminus. GreA releases sequences of 2 to 3 nucleotides. The chain is Transcription elongation factor GreA from Mycobacteroides abscessus (strain ATCC 19977 / DSM 44196 / CCUG 20993 / CIP 104536 / JCM 13569 / NCTC 13031 / TMC 1543 / L948) (Mycobacterium abscessus).